We begin with the raw amino-acid sequence, 329 residues long: Beta-ketoacyl-[acyl-carrier-protein] synthase III (329 aa).

Active-site residues include C123 and H256. Residues 257 to 261 (QANIR) are ACP-binding. Residue N286 is part of the active site.

Belongs to the thiolase-like superfamily. FabH family. As to quaternary structure, homodimer.

The protein localises to the cytoplasm. It carries out the reaction malonyl-[ACP] + acetyl-CoA + H(+) = 3-oxobutanoyl-[ACP] + CO2 + CoA. It participates in lipid metabolism; fatty acid biosynthesis. Its function is as follows. Catalyzes the condensation reaction of fatty acid synthesis by the addition to an acyl acceptor of two carbons from malonyl-ACP. Catalyzes the first condensation reaction which initiates fatty acid synthesis and may therefore play a role in governing the total rate of fatty acid production. Possesses both acetoacetyl-ACP synthase and acetyl transacylase activities. Its substrate specificity determines the biosynthesis of branched-chain and/or straight-chain of fatty acids. The polypeptide is Beta-ketoacyl-[acyl-carrier-protein] synthase III (Burkholderia orbicola (strain AU 1054)).